The sequence spans 591 residues: Peroxisome assembly protein 2 (591 aa).

The tract at residues 1–78 is disordered; it reads MSDSDPKPTA…TNIDTNNNTN (78 aa). Topologically, residues 1 to 148 are peroxisomal matrix; it reads MSDSDPKPTA…TSREGTRPAF (148 aa). Residues 7 to 26 show a composition bias toward low complexity; that stretch reads KPTAAKGAAPTSIPNSTRNP. The segment covering 27–54 has biased composition (pro residues); sequence NPTPPNPNPNPNPISTPAPTPTATPSPP. A compositionally biased stretch (low complexity) spans 55–78; sequence IASSSNNGNNSTRSTNIDTNNNTN. The chain crosses the membrane as a helical span at residues 149 to 175; sequence RVGQVDAELLDEELVELLRGQVREALR. Residues 176 to 196 are Cytoplasmic-facing; the sequence is YVGGGGGGGGGGGGGGVGSGV. A helical transmembrane segment spans residues 197–222; that stretch reads AQDWEAEISLALRAVLFKLTVWDHDA. The Peroxisomal matrix portion of the chain corresponds to 223–246; it reads TYGAALQNLKYTDARRDGPALAPP. A helical transmembrane segment spans residues 247 to 273; it reads SRWQKALYGLVTVGGRYLWAKWEDWLL. Topologically, residues 274-283 are cytoplasmic; it reads EQDDGFEGPS. Residues 284–314 traverse the membrane as a helical segment; it reads PRVKRLARWTSALSTLHASAALVSFLVFLLH. Residues 315 to 341 lie on the Peroxisomal matrix side of the membrane; the sequence is GRYRTLLDRLLRMRLAPPTSQVSREVS. A helical transmembrane segment spans residues 342-365; sequence FEYLNRQLVWHAFTEFLLFVLPLV. Over 366-591 the chain is Cytoplasmic; sequence GINRWRRWLA…EDGLDEDPES (226 aa). Residues C408, C411, C449, C451, C454, C457, C472, and C475 each coordinate Zn(2+). An RING-type; atypical zinc finger spans residues 408–475; that stretch reads CAICYRDQNS…EGEGWPCLRC (68 aa). A disordered region spans residues 512–591; the sequence is KAPSDHEEEE…EDGLDEDPES (80 aa). Composition is skewed to acidic residues over residues 517 to 537 and 575 to 591; these read HEEE…ENEG and SEDY…DPES.

This sequence belongs to the pex2/pex10/pex12 family. Component of the PEX2-PEX10-PEX12 retrotranslocation channel, composed of PEX2, PEX10 and PEX12.

It is found in the peroxisome membrane. The enzyme catalyses [E2 ubiquitin-conjugating enzyme]-S-ubiquitinyl-L-cysteine + [acceptor protein]-L-cysteine = [E2 ubiquitin-conjugating enzyme]-L-cysteine + [acceptor protein]-S-ubiquitinyl-L-cysteine.. The protein operates within protein modification; protein ubiquitination. In terms of biological role, E3 ubiquitin-protein ligase component of a retrotranslocation channel required for peroxisome organization by mediating export of the PEX5 receptor from peroxisomes to the cytosol, thereby promoting PEX5 recycling. The retrotranslocation channel is composed of PEX2, PEX10 and PEX12; each subunit contributing transmembrane segments that coassemble into an open channel that specifically allows the passage of PEX5 through the peroxisomal membrane. PEX2 also regulates peroxisome organization by acting as a E3 ubiquitin-protein ligase. PEX2 ubiquitinates PEX5 during its passage through the retrotranslocation channel: catalyzes monoubiquitination of PEX5 at 'Cys-6', a modification that acts as a signal for PEX5 extraction into the cytosol. The chain is Peroxisome assembly protein 2 from Thermothelomyces thermophilus (strain ATCC 42464 / BCRC 31852 / DSM 1799) (Sporotrichum thermophile).